The sequence spans 956 residues: MAM domain-containing glycosylphosphatidylinositol anchor protein 2 (956 aa).

The N-terminal stretch at 1–25 is a signal peptide; sequence MDLLYGLVWLLTVLLEGISGQGVYA. 2 consecutive Ig-like domains span residues 27–127 and 134–232; these read PTVR…IRVD and PVVT…KMVS. 2 cysteine pairs are disulfide-bonded: Cys-62/Cys-110 and Cys-159/Cys-216. N-linked (GlcNAc...) asparagine glycosylation is found at Asn-92, Asn-213, and Asn-237. Ig-like domains are found at residues 242–328, 340–436, 442–533, and 540–627; these read PSIK…NIIV, PDPY…VNIS, PNLT…ALVQ, and PAVE…FLVT. 2 cysteine pairs are disulfide-bonded: Cys-264–Cys-310 and Cys-359–Cys-417. Asn-434, Asn-443, Asn-504, Asn-610, and Asn-703 each carry an N-linked (GlcNAc...) asparagine glycan. Disulfide bonds link Cys-465/Cys-515 and Cys-561/Cys-611. The region spanning 638–739 is the Fibronectin type-III domain; it reads DTYNPVWQNR…IRVIKYSAPV (102 aa). In terms of domain architecture, MAM spans 746-921; the sequence is FHCGFEDGNI…VSIAEGECAK (176 aa). Residue Asp-931 is the site of GPI-anchor amidated aspartate attachment. A propeptide spans 932-956 (removed in mature form); sequence GAVGILVHIWLFPIIVLISILSPRR.

As to quaternary structure, interacts (through the Ig-like domains) with NLGN2. As to expression, detected in Leydig cells, syncytiotrophoblast, duodenal villi epithelial cells and neutrophils from kidney and cutaneous squamous cell carcinoma (at protein level).

It is found in the cell membrane. In terms of biological role, may be involved in cell-cell interactions. The protein is MAM domain-containing glycosylphosphatidylinositol anchor protein 2 (MDGA2) of Homo sapiens (Human).